Here is a 200-residue protein sequence, read N- to C-terminus: Protein GrpE (200 aa).

Composition is skewed to acidic residues over residues 1–17 (MNEQPNEELQSEDEQFD) and 34–44 (AFAEAGEETRD). The interval 1–49 (MNEQPNEELQSEDEQFDPQETVSFEGETAANDEAFAEAGEETRDEEMTR) is disordered.

Belongs to the GrpE family. Homodimer.

Its subcellular location is the cytoplasm. Its function is as follows. Participates actively in the response to hyperosmotic and heat shock by preventing the aggregation of stress-denatured proteins, in association with DnaK and GrpE. It is the nucleotide exchange factor for DnaK and may function as a thermosensor. Unfolded proteins bind initially to DnaJ; upon interaction with the DnaJ-bound protein, DnaK hydrolyzes its bound ATP, resulting in the formation of a stable complex. GrpE releases ADP from DnaK; ATP binding to DnaK triggers the release of the substrate protein, thus completing the reaction cycle. Several rounds of ATP-dependent interactions between DnaJ, DnaK and GrpE are required for fully efficient folding. The protein is Protein GrpE of Rhodopirellula baltica (strain DSM 10527 / NCIMB 13988 / SH1).